A 507-amino-acid chain; its full sequence is WD repeat-containing protein fzy-1 (507 aa).

Disordered regions lie at residues methionine 1 to leucine 39 and asparagine 74 to glycine 95. Composition is skewed to polar residues over residues valine 15–leucine 24 and asparagine 74–asparagine 86. WD repeat units lie at residues threonine 219–tyrosine 258, glycine 313–valine 352, glutamate 364–arginine 406, and cysteine 411–histidine 450.

It belongs to the WD repeat CDC20/Fizzy family.

The protein localises to the chromosome. It localises to the cytoplasm. Functionally, plays a role in metaphase-anaphase transition during meiosis I. Required for embryonic anterior-posterior axis formation. In Caenorhabditis elegans, this protein is WD repeat-containing protein fzy-1.